Here is a 1438-residue protein sequence, read N- to C-terminus: DNA polymerase III PolC-type (1438 aa).

One can recognise an Exonuclease domain in the interval 422-578 (YVVFDVETTG…YDTEATAYMF (157 aa)).

It belongs to the DNA polymerase type-C family. PolC subfamily.

Its subcellular location is the cytoplasm. It carries out the reaction DNA(n) + a 2'-deoxyribonucleoside 5'-triphosphate = DNA(n+1) + diphosphate. Its function is as follows. Required for replicative DNA synthesis. This DNA polymerase also exhibits 3' to 5' exonuclease activity. This chain is DNA polymerase III PolC-type, found in Staphylococcus saprophyticus subsp. saprophyticus (strain ATCC 15305 / DSM 20229 / NCIMB 8711 / NCTC 7292 / S-41).